The following is a 265-amino-acid chain: MDPISAVSEELAEIEGQINDIFRALSNGFQKLEKIKDANRQSRQLEELTDKMRDCKSLIKDFDREIKSLESGNDASTNRMLNDRRQSMVKELNSYVALKKKYSSNLASNNKRVDLFDGPGEEHMEENVLLASNMSNQELMDKGNSMMDDTDQAIERGKKIVQETINVGTDTSAALKAQTEQMSRVVNELDSIHFSLKKASKLVKEIGRQVATDKCIMAFLFLIVIGVIAIIIVKIVNPNNKDIRDIPGVGLAPPAMNRRLLWNHY.

At 1 to 215 the chain is on the cytoplasmic side; it reads MDPISAVSEE…IGRQVATDKC (215 aa). Positions 30-75 form a coiled coil; the sequence is QKLEKIKDANRQSRQLEELTDKMRDCKSLIKDFDREIKSLESGNDA. A t-SNARE coiled-coil homology domain is found at 144–206; that stretch reads NSMMDDTDQA…KKASKLVKEI (63 aa). A helical; Anchor for type IV membrane protein membrane pass occupies residues 216 to 236; that stretch reads IMAFLFLIVIGVIAIIIVKIV. At 237–265 the chain is on the vesicular side; it reads NPNNKDIRDIPGVGLAPPAMNRRLLWNHY.

The protein belongs to the novel plant SNARE family. In terms of assembly, interacts with KNOLLE to form a t-SNARE complex. Does not interact with SYP21, VTI12 or VPS45. As to expression, expressed in roots, stems, flower, siliques, expanding leaves, but not in mature leaves. Not limited to dividing cells.

Its subcellular location is the membrane. Its function is as follows. t-SNARE involved in diverse vesicle trafficking and membrane fusion processes, including cell plate formation. The chain is Novel plant SNARE 11 (NPSN11) from Arabidopsis thaliana (Mouse-ear cress).